The chain runs to 215 residues: ATP phosphoribosyltransferase (215 aa).

This sequence belongs to the ATP phosphoribosyltransferase family. Short subfamily. Heteromultimer composed of HisG and HisZ subunits.

Its subcellular location is the cytoplasm. It carries out the reaction 1-(5-phospho-beta-D-ribosyl)-ATP + diphosphate = 5-phospho-alpha-D-ribose 1-diphosphate + ATP. It participates in amino-acid biosynthesis; L-histidine biosynthesis; L-histidine from 5-phospho-alpha-D-ribose 1-diphosphate: step 1/9. In terms of biological role, catalyzes the condensation of ATP and 5-phosphoribose 1-diphosphate to form N'-(5'-phosphoribosyl)-ATP (PR-ATP). Has a crucial role in the pathway because the rate of histidine biosynthesis seems to be controlled primarily by regulation of HisG enzymatic activity. The polypeptide is ATP phosphoribosyltransferase (Prochlorococcus marinus subsp. pastoris (strain CCMP1986 / NIES-2087 / MED4)).